The sequence spans 399 residues: Argininosuccinate synthase (399 aa).

An ATP-binding site is contributed by 9-17 (AYSGGLDTS). Residue Tyr85 coordinates L-citrulline. Gly115 serves as a coordination point for ATP. Residues Thr117, Asn121, and Asp122 each coordinate L-aspartate. Residue Asn121 participates in L-citrulline binding. Positions 125, 173, 258, and 270 each coordinate L-citrulline.

The protein belongs to the argininosuccinate synthase family. Type 1 subfamily. In terms of assembly, homotetramer.

The protein resides in the cytoplasm. The catalysed reaction is L-citrulline + L-aspartate + ATP = 2-(N(omega)-L-arginino)succinate + AMP + diphosphate + H(+). It functions in the pathway amino-acid biosynthesis; L-arginine biosynthesis; L-arginine from L-ornithine and carbamoyl phosphate: step 2/3. In Streptococcus gordonii (strain Challis / ATCC 35105 / BCRC 15272 / CH1 / DL1 / V288), this protein is Argininosuccinate synthase.